We begin with the raw amino-acid sequence, 918 residues long: Glutamate receptor ionotropic, kainate 1 (918 aa).

Positions 1 to 30 are cleaved as a signal peptide; it reads MEHGTLLAQPGLWTRDTSWALLYFLCYILP. The Extracellular portion of the chain corresponds to 31–576; that stretch reads QTAPQVLRIG…VFSFLNPLSP (546 aa). 7 N-linked (GlcNAc...) asparagine glycosylation sites follow: Asn-68, Asn-74, Asn-276, Asn-379, Asn-428, Asn-439, and Asn-446. L-glutamate-binding residues include Pro-531, Thr-533, and Arg-538. Asn-561 is a glycosylation site (N-linked (GlcNAc...) asparagine). The chain crosses the membrane as a helical span at residues 577–597; it reads DIWMYVLLACLGVSCVLFVIA. Topologically, residues 598 to 653 are cytoplasmic; that stretch reads RFTPYEWYNPHPCNPDSDVVENNFTLLNSFWFGVGALMQQGSELMPKALSTRIVGG. A helical membrane pass occupies residues 654–674; the sequence is IWWFFTLIIISSYTANLAAFL. Topologically, residues 675–834 are extracellular; that stretch reads TVERMESPID…KEASALGVEN (160 aa). Ser-704 and Thr-705 together coordinate L-glutamate. Ser-725 carries the post-translational modification Phosphoserine; by PKC. Position 753 (Glu-753) interacts with L-glutamate. The residue at position 761 (Thr-761) is a Phosphothreonine; by PKC. A disulfide bridge connects residues Cys-765 and Cys-819. Asn-766 carries an N-linked (GlcNAc...) asparagine glycan. Residues 835–855 traverse the membrane as a helical segment; that stretch reads IGGIFIVLAAGLVLSVFVAIG. Topologically, residues 856-918 are cytoplasmic; the sequence is EFIYKSRKNN…IRKQSSVHTV (63 aa).

Belongs to the glutamate-gated ion channel (TC 1.A.10.1) family. GRIK1 subfamily. Homotetramer or heterotetramer of pore-forming glutamate receptor subunits. Tetramers may be formed by the dimerization of dimers. Can form functional heteromeric receptors with GRIK5. Can form functional heteromeric receptors with GRIK4. Interacts with KLHL17.

Its subcellular location is the cell membrane. The protein localises to the postsynaptic cell membrane. The catalysed reaction is Ca(2+)(in) = Ca(2+)(out). Ionotropic glutamate receptor that functions as a cation-permeable ligand-gated ion channel, gated by L-glutamate and the glutamatergic agonist kainic acid. L-glutamate acts as an excitatory neurotransmitter at many synapses in the central nervous system. Binding of the excitatory neurotransmitter L-glutamate induces a conformation change, leading to the opening of the cation channel, and thereby converts the chemical signal to an electrical impulse. The receptor then desensitizes rapidly and enters a transient inactive state, characterized by the presence of bound agonist. In terms of biological role, ionotropic glutamate receptor that functions as a cation-permeable ligand-gated ion channel, gated by L-glutamate and the glutamatergic agonist kainic acid. This is Glutamate receptor ionotropic, kainate 1 (GRIK1) from Homo sapiens (Human).